A 459-amino-acid chain; its full sequence is Ribulose bisphosphate carboxylase (459 aa).

Asn-111 is a substrate binding site. Residue Lys-166 is the Proton acceptor of the active site. Residue Lys-168 coordinates substrate. Lys-191, Asp-193, and Glu-194 together coordinate Mg(2+). An N6-carboxylysine modification is found at Lys-191. The Proton acceptor role is filled by His-287. Residues Arg-288, His-321, and Ser-368 each coordinate substrate.

The protein belongs to the RuBisCO large chain family. Type II subfamily. Homodimer. The cofactor is Mg(2+).

The enzyme catalyses 2 (2R)-3-phosphoglycerate + 2 H(+) = D-ribulose 1,5-bisphosphate + CO2 + H2O. It carries out the reaction D-ribulose 1,5-bisphosphate + O2 = 2-phosphoglycolate + (2R)-3-phosphoglycerate + 2 H(+). RuBisCO catalyzes two reactions: the carboxylation of D-ribulose 1,5-bisphosphate, the primary event in carbon dioxide fixation, as well as the oxidative fragmentation of the pentose substrate. Both reactions occur simultaneously and in competition at the same active site. This chain is Ribulose bisphosphate carboxylase, found in Polaromonas naphthalenivorans (strain CJ2).